The following is a 147-amino-acid chain: MKVISENRKGLYGYKIIEKHEAGISLLGWEVKSARAQTVNLTNSYIFFKKGELFLCNANFAKYMLLKVEEDRDRKLLMHKKEIIRLKNKLDRLSSTTIKPTKIYFNNKSKIKVEIALVQGMNRADKREDLKKRDNEKYMQKVKSNYL.

This sequence belongs to the SmpB family.

It is found in the cytoplasm. Required for rescue of stalled ribosomes mediated by trans-translation. Binds to transfer-messenger RNA (tmRNA), required for stable association of tmRNA with ribosomes. tmRNA and SmpB together mimic tRNA shape, replacing the anticodon stem-loop with SmpB. tmRNA is encoded by the ssrA gene; the 2 termini fold to resemble tRNA(Ala) and it encodes a 'tag peptide', a short internal open reading frame. During trans-translation Ala-aminoacylated tmRNA acts like a tRNA, entering the A-site of stalled ribosomes, displacing the stalled mRNA. The ribosome then switches to translate the ORF on the tmRNA; the nascent peptide is terminated with the 'tag peptide' encoded by the tmRNA and targeted for degradation. The ribosome is freed to recommence translation, which seems to be the essential function of trans-translation. The sequence is that of SsrA-binding protein from Mycoplasmopsis agalactiae (strain NCTC 10123 / CIP 59.7 / PG2) (Mycoplasma agalactiae).